The following is a 339-amino-acid chain: DNA-directed RNA polymerase subunit alpha (339 aa).

The tract at residues 1–235 (MTIQKNWQEL…DQLNVFVNFE (235 aa)) is alpha N-terminal domain (alpha-NTD). The alpha C-terminal domain (alpha-CTD) stretch occupies residues 251-339 (FNPAFLKKVD…ELAKRFEDHY (89 aa)).

This sequence belongs to the RNA polymerase alpha chain family. As to quaternary structure, homodimer. The RNAP catalytic core consists of 2 alpha, 1 beta, 1 beta' and 1 omega subunit. When a sigma factor is associated with the core the holoenzyme is formed, which can initiate transcription.

The enzyme catalyses RNA(n) + a ribonucleoside 5'-triphosphate = RNA(n+1) + diphosphate. Its function is as follows. DNA-dependent RNA polymerase catalyzes the transcription of DNA into RNA using the four ribonucleoside triphosphates as substrates. The protein is DNA-directed RNA polymerase subunit alpha of Rhodopseudomonas palustris (strain BisA53).